The chain runs to 20 residues: ILGPVLGLVGNALGGLIKNE.

This sequence belongs to the bombinin family. Expressed by the skin glands.

It localises to the secreted. Has antimicrobial activity. The sequence is that of Maximin-Ht from Bombina maxima (Giant fire-bellied toad).